The following is a 450-amino-acid chain: Casein kinase 1-like protein 1 (450 aa).

Residues 9–278 (FRLGRKIGSG…LKRIFRDLFI (270 aa)) form the Protein kinase domain. ATP is bound by residues 15 to 23 (IGSGSFGEI) and Lys-38. Residue Asp-128 is the Proton acceptor of the active site. The disordered stretch occupies residues 311–450 (AVGTSAALPP…LQVSDEHHPH (140 aa)). Positions 328–342 (YTGEEEGRPHMESSR) are enriched in basic and acidic residues. The segment covering 349 to 365 (LDNSGNISNQPTSSSAR) has biased composition (polar residues). A compositionally biased stretch (low complexity) spans 371-382 (SSSLFAQSAGSS).

This sequence belongs to the protein kinase superfamily. CK1 Ser/Thr protein kinase family. Casein kinase I subfamily. Monomer. Autophosphorylated. Expressed in flowers.

The protein resides in the cytoplasm. Its subcellular location is the cell junction. It localises to the plasmodesma. It carries out the reaction L-seryl-[protein] + ATP = O-phospho-L-seryl-[protein] + ADP + H(+). It catalyses the reaction L-threonyl-[protein] + ATP = O-phospho-L-threonyl-[protein] + ADP + H(+). In terms of biological role, casein kinases are operationally defined by their preferential utilization of acidic proteins such as caseins as substrates. It can phosphorylate a large number of proteins. The chain is Casein kinase 1-like protein 1 from Arabidopsis thaliana (Mouse-ear cress).